Here is a 503-residue protein sequence, read N- to C-terminus: Maturase K (503 aa).

The protein belongs to the intron maturase 2 family. MatK subfamily.

It localises to the plastid. It is found in the chloroplast. In terms of biological role, usually encoded in the trnK tRNA gene intron. Probably assists in splicing its own and other chloroplast group II introns. This is Maturase K from Vicia villosa (Hairy vetch).